The chain runs to 152 residues: Large ribosomal subunit protein bL9 (152 aa).

The protein belongs to the bacterial ribosomal protein bL9 family.

In terms of biological role, binds to the 23S rRNA. In Picosynechococcus sp. (strain ATCC 27264 / PCC 7002 / PR-6) (Agmenellum quadruplicatum), this protein is Large ribosomal subunit protein bL9.